The following is a 288-amino-acid chain: G1/S-specific cyclin-D2 (288 aa).

The Cyclin N-terminal domain maps to 26–151 (VLQNLLTIEE…VVLGKLKWNL (126 aa)). Residues 264–288 (DQDGSKSEDELDQASTPTDVRDIDL) are disordered. S270 is modified (phosphoserine). The residue at position 279 (T279) is a Phosphothreonine.

This sequence belongs to the cyclin family. Cyclin D subfamily. In terms of assembly, interacts with either CDK4 or CDK6 protein kinase to form a serine/threonine kinase holoenzyme complex. The cyclin subunit imparts substrate specificity to the complex. Post-translationally, phosphorylation at Thr-279 by MAP kinases is required for ubiquitination and degradation by the DCX(AMBRA1) complex. Ubiquitinated by the DCX(AMBRA1) complex during the transition from G1 to S cell phase, leading to its degradation: ubiquitination is dependent on Thr-279 phosphorylation. The DCX(AMBRA1) complex represents the major regulator of CCND2 stability during the G1/S transition. Polyubiquitinated by the SCF(FBXL2) complex, leading to proteasomal degradation.

The protein localises to the nucleus. Its subcellular location is the cytoplasm. The protein resides in the nucleus membrane. Functionally, regulatory component of the cyclin D2-CDK4 (DC) complex that phosphorylates and inhibits members of the retinoblastoma (RB) protein family including RB1 and regulates the cell-cycle during G(1)/S transition. Phosphorylation of RB1 allows dissociation of the transcription factor E2F from the RB/E2F complex and the subsequent transcription of E2F target genes which are responsible for the progression through the G(1) phase. Hypophosphorylates RB1 in early G(1) phase. Cyclin D-CDK4 complexes are major integrators of various mitogenenic and antimitogenic signals. This is G1/S-specific cyclin-D2 (CCND2) from Sus scrofa (Pig).